The following is a 92-amino-acid chain: MTRSLKKNPFVAKHLLRKIEKLNTKAEKEIIITWSRASTIIPTMIGHTIAIHNGREHLPVYIIDLMVGHKLGEFSPTINFRGHAKNDNRSRR.

The protein belongs to the universal ribosomal protein uS19 family.

The protein resides in the plastid. Its subcellular location is the chloroplast. Its function is as follows. Protein S19 forms a complex with S13 that binds strongly to the 16S ribosomal RNA. The chain is Small ribosomal subunit protein uS19c from Nasturtium officinale (Watercress).